Consider the following 428-residue polypeptide: Histidinol dehydrogenase (428 aa).

Tyrosine 124, glutamine 186, and asparagine 209 together coordinate NAD(+). Residues serine 233, glutamine 255, and histidine 258 each coordinate substrate. Residues glutamine 255 and histidine 258 each coordinate Zn(2+). Active-site proton acceptor residues include glutamate 322 and histidine 323. Residues histidine 323, aspartate 356, glutamate 410, and histidine 415 each contribute to the substrate site. Aspartate 356 serves as a coordination point for Zn(2+). Residue histidine 415 participates in Zn(2+) binding.

It belongs to the histidinol dehydrogenase family. Requires Zn(2+) as cofactor.

It carries out the reaction L-histidinol + 2 NAD(+) + H2O = L-histidine + 2 NADH + 3 H(+). The protein operates within amino-acid biosynthesis; L-histidine biosynthesis; L-histidine from 5-phospho-alpha-D-ribose 1-diphosphate: step 9/9. In terms of biological role, catalyzes the sequential NAD-dependent oxidations of L-histidinol to L-histidinaldehyde and then to L-histidine. This chain is Histidinol dehydrogenase, found in Bacteroides fragilis (strain ATCC 25285 / DSM 2151 / CCUG 4856 / JCM 11019 / LMG 10263 / NCTC 9343 / Onslow / VPI 2553 / EN-2).